Consider the following 393-residue polypeptide: Phosphoglycerate kinase (393 aa).

Substrate is bound by residues 22-24 (DFN), Arg-37, 60-63 (HLGR), Arg-119, and Arg-152. ATP is bound by residues Lys-202, Gly-293, Glu-324, and 350 to 353 (GGDS).

Belongs to the phosphoglycerate kinase family. As to quaternary structure, monomer.

It localises to the cytoplasm. The catalysed reaction is (2R)-3-phosphoglycerate + ATP = (2R)-3-phospho-glyceroyl phosphate + ADP. The protein operates within carbohydrate degradation; glycolysis; pyruvate from D-glyceraldehyde 3-phosphate: step 2/5. This chain is Phosphoglycerate kinase, found in Borreliella afzelii (strain PKo) (Borrelia afzelii).